Here is a 253-residue protein sequence, read N- to C-terminus: MNEQGEAINSSAESRIQLESSWKAHVGNWLLRPEMRDLSSFLRARKVAGVSVYPPGSQIFAAFEATPFQRVKAVILGQDPYHGQGQAHGLCFSVRPGMPLPPSLLNIYKELEEDLGLLRPDHGCLLPWANRGVLLLNAVLTVEDGRAGAHQGKGWEGFTDHVVDTLNREREGLVFMLWGSYAQAKGKVIDTRRHLVLKAPHPSPLSAHRGFLGCRHFSLCNQYLSQHGLGMVDWSLPPCIALDGAILNGRIAV.

Asp79 serves as the catalytic Proton acceptor.

The protein belongs to the uracil-DNA glycosylase (UDG) superfamily. UNG family.

The protein resides in the cytoplasm. The enzyme catalyses Hydrolyzes single-stranded DNA or mismatched double-stranded DNA and polynucleotides, releasing free uracil.. Excises uracil residues from the DNA which can arise as a result of misincorporation of dUMP residues by DNA polymerase or due to deamination of cytosine. This chain is Uracil-DNA glycosylase, found in Xylella fastidiosa (strain M12).